Reading from the N-terminus, the 190-residue chain is Elongation factor P-like protein (190 aa).

It belongs to the elongation factor P family.

The sequence is that of Elongation factor P-like protein from Pectobacterium carotovorum subsp. carotovorum (strain PC1).